We begin with the raw amino-acid sequence, 388 residues long: Alpha-2A adrenergic receptor (388 aa).

The Extracellular segment spans residues 1–22 (MICGANATNGTNATKEYTLLVA). Residues Asn6, Asn9, and Asn12 are each glycosylated (N-linked (GlcNAc...) asparagine). The chain crosses the membrane as a helical span at residues 23–48 (LPLSIAVGLLILLIIFGNVLVIIAVF). Over 49–59 (TSRALRAPQNL) the chain is Cytoplasmic. The chain crosses the membrane as a helical span at residues 60–85 (FLVSLASADILVATLVMPFSLANELM). Topologically, residues 86–95 (GMWTFGGVWC) are extracellular. Cys95 and Cys169 form a disulfide bridge. A helical transmembrane segment spans residues 96–118 (EIYLALDVLFCTASITHLCAISL). At 119–138 (DRYWSITQAIEYNLKRTPQR) the chain is on the cytoplasmic side. The chain crosses the membrane as a helical span at residues 139–162 (IKRIIFIVWIIAAVISCPPLITMK). Topologically, residues 163-173 (KSEGDICDINK) are extracellular. Residues 174–198 (EKWYIVSSCIGSFFLPCIIMVLVYI) traverse the membrane as a helical segment. The Cytoplasmic segment spans residues 199-311 (RIYQIAKKRT…RQNREKRFTF (113 aa)). The interval 208-291 (TRAPPGDHRK…PGDGDKTEAC (84 aa)) is disordered. The segment covering 212 to 231 (PGDHRKNEVGKKENDPHEKL) has biased composition (basic and acidic residues). Residues 266–275 (LKKKSSKGKT) are compositionally biased toward basic residues. Residues 312–337 (VLAVVIGVFVICWFPFFFTYTFTAFC) form a helical membrane-spanning segment. Residues 338–344 (DCCVPET) are Extracellular-facing. The chain crosses the membrane as a helical span at residues 345–368 (LFKFFFWFGYCNSSLNPIIYTIFN). At 369-388 (NDFRRSFKKILCRRDKRRVV) the chain is on the cytoplasmic side. Residue Cys380 is the site of S-palmitoyl cysteine attachment.

Belongs to the G-protein coupled receptor 1 family. Adrenergic receptor subfamily. ADRA2A sub-subfamily.

The protein resides in the cell membrane. In terms of biological role, alpha-2 adrenergic receptors mediate the catecholamine-induced inhibition of adenylate cyclase through the action of G proteins. The order of potency for this receptor is dexmedetomidine &gt; oxymetazoline = epinephrine &gt; norepinephrine. This Danio rerio (Zebrafish) protein is Alpha-2A adrenergic receptor.